A 299-amino-acid chain; its full sequence is UDP-N-acetylenolpyruvoylglucosamine reductase (299 aa).

Residues 27–192 form the FAD-binding PCMH-type domain; sequence KSGGAADWLF…VGATFRGRPG (166 aa). R172 is an active-site residue. Residues 206–225 form a disordered region; sequence ASREASQPLRSRTGGSTFKN. Polar residues predominate over residues 208–224; sequence REASQPLRSRTGGSTFK. S221 functions as the Proton donor in the catalytic mechanism. E291 is an active-site residue.

The protein belongs to the MurB family. FAD serves as cofactor.

It localises to the cytoplasm. It carries out the reaction UDP-N-acetyl-alpha-D-muramate + NADP(+) = UDP-N-acetyl-3-O-(1-carboxyvinyl)-alpha-D-glucosamine + NADPH + H(+). Its pathway is cell wall biogenesis; peptidoglycan biosynthesis. Functionally, cell wall formation. The sequence is that of UDP-N-acetylenolpyruvoylglucosamine reductase from Sphingopyxis alaskensis (strain DSM 13593 / LMG 18877 / RB2256) (Sphingomonas alaskensis).